Here is a 242-residue protein sequence, read N- to C-terminus: UPF0246 protein SSA_1395 (242 aa).

This sequence belongs to the UPF0246 family.

In Streptococcus sanguinis (strain SK36), this protein is UPF0246 protein SSA_1395.